The primary structure comprises 747 residues: Histone-lysine N-methyltransferase EZH1 (747 aa).

The disordered stretch occupies residues 188–231 (DEEEEGHNDTSDGKQDDSKEDLPVTRKRKRHAIEGNKKSSKKQF). The segment covering 194–211 (HNDTSDGKQDDSKEDLPV) has biased composition (basic and acidic residues). Lysine 327 is covalently cross-linked (Glycyl lysine isopeptide (Lys-Gly) (interchain with G-Cter in SUMO2)). The tract at residues 378–421 (SAVAETKEGDSDRDTGNDWASSSSEANSRCQTPTKQKASPAPPQ) is disordered. Basic and acidic residues predominate over residues 382–393 (ETKEGDSDRDTG). The segment covering 395 to 414 (DWASSSSEANSRCQTPTKQK) has biased composition (polar residues). The Nuclear localization signal motif lies at 491 to 496 (QKKKRK). The 103-residue stretch at 504-606 (CRKIQLKKDN…CKVVSCKNCS (103 aa)) folds into the CXC domain. Residues 613–728 (KHLLLAPSDV…AGEELFLDYR (116 aa)) form the SET domain.

This sequence belongs to the class V-like SAM-binding methyltransferase superfamily. Histone-lysine methyltransferase family. EZ subfamily. Component of the PRC2/EED-EZH1 complex, which includes EED, EZH1, SUZ12, RBBP4 and AEBP2. The PRC2/EED-EZH1 is less abundant than the PRC2/EED-EZH2 complex, has weak methyltransferase activity and compacts chromatin in the absence of the methyltransferase cofactor S-adenosyl-L-methionine (SAM). Interacts with EZHIP; the interaction blocks EZH1 methyltransferase activity.

The protein resides in the nucleus. The catalysed reaction is L-lysyl(27)-[histone H3] + 3 S-adenosyl-L-methionine = N(6),N(6),N(6)-trimethyl-L-lysyl(27)-[histone H3] + 3 S-adenosyl-L-homocysteine + 3 H(+). Polycomb group (PcG) protein. Catalytic subunit of the PRC2/EED-EZH1 complex, which methylates 'Lys-27' of histone H3, leading to transcriptional repression of the affected target gene. Able to mono-, di- and trimethylate 'Lys-27' of histone H3 to form H3K27me1, H3K27me2 and H3K27me3, respectively. Required for embryonic stem cell derivation and self-renewal, suggesting that it is involved in safeguarding embryonic stem cell identity. Compared to EZH2-containing complexes, it is less abundant in embryonic stem cells, has weak methyltransferase activity and plays a less critical role in forming H3K27me3, which is required for embryonic stem cell identity and proper differentiation. This chain is Histone-lysine N-methyltransferase EZH1 (EZH1), found in Pongo abelii (Sumatran orangutan).